Reading from the N-terminus, the 83-residue chain is Conotoxin Im22.1 (83 aa).

An N-terminal signal peptide occupies residues 1 to 18 (MMMRVFIAMFFLLALVEA). Residues 19 to 26 (GWPRLYDK) constitute a propeptide that is removed on maturation.

This sequence belongs to the conotoxin E superfamily. Contain 4 disulfide bonds. As to expression, expressed by the venom duct.

Its subcellular location is the secreted. Its function is as follows. Probable neurotoxin. The chain is Conotoxin Im22.1 from Conus imperialis (Imperial cone).